We begin with the raw amino-acid sequence, 166 residues long: Small ribosomal subunit protein uS5 (166 aa).

The S5 DRBM domain occupies 11 to 74 (LNEKLIAVNR…EKARRNMFTI (64 aa)).

It belongs to the universal ribosomal protein uS5 family. As to quaternary structure, part of the 30S ribosomal subunit. Contacts proteins S4 and S8.

In terms of biological role, with S4 and S12 plays an important role in translational accuracy. Functionally, located at the back of the 30S subunit body where it stabilizes the conformation of the head with respect to the body. This Aliivibrio fischeri (strain ATCC 700601 / ES114) (Vibrio fischeri) protein is Small ribosomal subunit protein uS5.